The sequence spans 156 residues: Small ribosomal subunit protein uS7 (156 aa).

Belongs to the universal ribosomal protein uS7 family. Part of the 30S ribosomal subunit. Contacts proteins S9 and S11.

Its function is as follows. One of the primary rRNA binding proteins, it binds directly to 16S rRNA where it nucleates assembly of the head domain of the 30S subunit. Is located at the subunit interface close to the decoding center, probably blocks exit of the E-site tRNA. In Methylorubrum populi (strain ATCC BAA-705 / NCIMB 13946 / BJ001) (Methylobacterium populi), this protein is Small ribosomal subunit protein uS7.